The chain runs to 594 residues: Interactor of HORMAD1 protein 1 (594 aa).

3 coiled-coil regions span residues 109-135 (VGKSKGLLEQFEEKKKRAKDKCDSETL), 165-189 (QSILDSLETVAKTLQETIQAQNDLV), and 219-245 (EMKSNLKHLEVLVAQQSQEFQQLCEQL). Residues 434-443 (VEMRGKDKKQ) show a composition bias toward basic and acidic residues. The disordered stretch occupies residues 434-454 (VEMRGKDKKQQPRKAHRAHRG). The segment covering 444–454 (QPRKAHRAHRG) has biased composition (basic residues). Phosphoserine occurs at positions 588 and 589.

As to quaternary structure, part of the MCD recombinosome complex, at least composed of IHO1, REC114 and MEI4. Interacts with REC114. Interacts with MEI4. Interacts with HORMAD1. Interacts with ANKRD31.

The protein localises to the chromosome. Required for DNA double-strand breaks (DSBs) formation in unsynapsed regions during meiotic recombination. Probably acts by forming a complex with MEI4 and REC114, which activates DSBs formation in unsynapsed regions, an essential step to ensure completion of synapsis. Not required for HORMAD1 functions in pairing-independent synaptonemal complex formation, ATR recruitment to unsynapsed axes, meiotic silencing of unsynapsed chromatin (MSUC) or meiotic surveillance. The chain is Interactor of HORMAD1 protein 1 from Homo sapiens (Human).